We begin with the raw amino-acid sequence, 576 residues long: Arginine--tRNA ligase (576 aa).

Positions 123–133 match the 'HIGH' region motif; the sequence is PNIGKEMHVGH.

This sequence belongs to the class-I aminoacyl-tRNA synthetase family. In terms of assembly, monomer.

The protein resides in the cytoplasm. It catalyses the reaction tRNA(Arg) + L-arginine + ATP = L-arginyl-tRNA(Arg) + AMP + diphosphate. The sequence is that of Arginine--tRNA ligase from Wigglesworthia glossinidia brevipalpis.